A 128-amino-acid polypeptide reads, in one-letter code: Flagellar assembly factor FliW (128 aa).

It belongs to the FliW family. In terms of assembly, interacts with translational regulator CsrA and flagellin(s).

It localises to the cytoplasm. Its function is as follows. Acts as an anti-CsrA protein, binds CsrA and prevents it from repressing translation of its target genes, one of which is flagellin. Binds to flagellin and participates in the assembly of the flagellum. This is Flagellar assembly factor FliW from Campylobacter fetus subsp. fetus (strain 82-40).